The chain runs to 6269 residues: Nonribosomal peptide synthetase 1 (6269 aa).

An adenylation 1 region spans residues 249–781 (ENDWSRVCSF…VSGKLDRKSI (533 aa)). One can recognise a Carrier 1 domain in the interval 803–879 (RAANSTEDQL…ELATRVKGVT (77 aa)). S840 is subject to O-(pantetheine 4'-phosphoryl)serine. The epimerase 1 stretch occupies residues 894–1342 (LSPIQKLHFM…TLSDFPMLSL (449 aa)). The segment at 1373 to 1775 (SRMQQGILLS…FLQSLENIIH (403 aa)) is condensation 1. The adenylation 2 stretch occupies residues 1725 to 2333 (HDPAEFPVYV…TGLLDRWFLR (609 aa)). The tract at residues 2364–2386 (KPSPSQLLPSSTSATHRSSGTST) is disordered. Low complexity predominate over residues 2367–2376 (PSQLLPSSTS). Residues 2377–2386 (ATHRSSGTST) show a composition bias toward polar residues. Positions 2597 to 2670 (WRKYLADVES…TGSEEVCYGY (74 aa)) are condensation 2. The segment at 2845–3368 (RCAHEIIEQQ…SGKLDRKKLR (524 aa)) is adenylation 3. The Carrier 2 domain occupies 3392–3468 (ASDEGVEGTL…NMAKRCGMLQ (77 aa)). S3429 bears the O-(pantetheine 4'-phosphoryl)serine mark. The tract at residues 3512-3898 (CSPVQEGLLT…GQFSFVLEQL (387 aa)) is condensation 3. The segment at 3919 to 4454 (DSKEVALWNK…VSGKLDRKKI (536 aa)) is adenylation 4. One can recognise a Carrier 3 domain in the interval 4487-4563 (EDKSTAAKIL…ELIQAAEVET (77 aa)). S4524 is modified (O-(pantetheine 4'-phosphoryl)serine). Residues 4578-5024 (LSPIQNLYFK…DFPLLPITYD (447 aa)) are epimerase 2. Positions 5052–5466 (SSVQEGILLS…PSQLVSELDL (415 aa)) are condensation 4. The region spanning 5552 to 5628 (SKLMEPEKRL…DMLAAISASN (77 aa)) is the Carrier 4 domain. Residue S5589 is modified to O-(pantetheine 4'-phosphoryl)serine. The segment at 5628–5658 (NSSSALEPDSPADSNNEKPAEPPRLVELERN) is disordered. A compositionally biased stretch (basic and acidic residues) spans 5642–5657 (NNEKPAEPPRLVELER). Residues 5720 to 6067 (FFFDGRGSLD…SSSDGKLGVS (348 aa)) are condensation 5. The Carrier 5 domain occupies 6139–6220 (SDILVHSDVV…GQMAVLTLHN (82 aa)).

It belongs to the NRP synthetase family. Post-translationally, the thiolation domains are 4'-phosphopantetheinylated.

In terms of biological role, nonribosomal peptide synthesis (NRPS) is a key mechanism responsible for the biosynthesis of bioactive metabolites which are potentially contributing to organismal virulence. Contributes to improved fungal tolerance against oxidative stress, during the infection process. The protein is Nonribosomal peptide synthetase 1 (NRPS1) of Aspergillus fumigatus (strain ATCC MYA-4609 / CBS 101355 / FGSC A1100 / Af293) (Neosartorya fumigata).